A 986-amino-acid chain; its full sequence is Translation initiation factor IF-2 (986 aa).

Residues 47–388 are disordered; that stretch reads SAPAQTPHKE…RSKGRKGKYE (342 aa). Residues 53–64 show a composition bias toward basic and acidic residues; sequence PHKEVSQEEVRV. Residues 78–94 are compositionally biased toward low complexity; sequence PEAASAEAASAPAAQEE. The span at 95–113 shows a compositional bias: basic and acidic residues; sequence APQKAEPEKVEAEKAEAPK. Low complexity-rich tracts occupy residues 127–141 and 153–214; these read EAAP…PAEA and APVA…QAPA. 2 stretches are compositionally biased toward basic and acidic residues: residues 215-225 and 268-278; these read KAEEQEPEKAT and GVERPGTERPA. Positions 286–300 are enriched in low complexity; that stretch reads PAGAPGRPGERPTTG. The span at 358 to 374 shows a compositional bias: basic and acidic residues; that stretch reads GKKDSFKDILDKRERVF. The region spanning 486-653 is the tr-type G domain; sequence KRPPVVTIMG…MVLLQADVLE (168 aa). The interval 495–502 is G1; the sequence is GHVDHGKT. Position 495–502 (495–502) interacts with GTP; it reads GHVDHGKT. The G2 stretch occupies residues 520–524; it reads GITQH. Residues 541-544 form a G3 region; the sequence is DTPG. GTP is bound by residues 541–545 and 595–598; these read DTPGH and NKID. Positions 595–598 are G4; that stretch reads NKID. The interval 631–633 is G5; it reads SAK.

This sequence belongs to the TRAFAC class translation factor GTPase superfamily. Classic translation factor GTPase family. IF-2 subfamily.

It localises to the cytoplasm. Functionally, one of the essential components for the initiation of protein synthesis. Protects formylmethionyl-tRNA from spontaneous hydrolysis and promotes its binding to the 30S ribosomal subunits. Also involved in the hydrolysis of GTP during the formation of the 70S ribosomal complex. This Citrifermentans bemidjiense (strain ATCC BAA-1014 / DSM 16622 / JCM 12645 / Bem) (Geobacter bemidjiensis) protein is Translation initiation factor IF-2.